The chain runs to 199 residues: Phosphoheptose isomerase (199 aa).

The 163-residue stretch at 36 to 198 (MSQCLLNEHK…DRKLIPSSED (163 aa)) folds into the SIS domain. 51-53 (NGG) lines the substrate pocket. Residues His60 and Glu64 each contribute to the Zn(2+) site. Residues Glu64, 93–94 (ND), 119–121 (STS), Ser124, and Gln174 each bind substrate. Positions 174 and 182 each coordinate Zn(2+).

It belongs to the SIS family. GmhA subfamily. Homotetramer. Zn(2+) is required as a cofactor.

Its subcellular location is the cytoplasm. The catalysed reaction is 2 D-sedoheptulose 7-phosphate = D-glycero-alpha-D-manno-heptose 7-phosphate + D-glycero-beta-D-manno-heptose 7-phosphate. The protein operates within carbohydrate biosynthesis; D-glycero-D-manno-heptose 7-phosphate biosynthesis; D-glycero-alpha-D-manno-heptose 7-phosphate and D-glycero-beta-D-manno-heptose 7-phosphate from sedoheptulose 7-phosphate: step 1/1. In terms of biological role, catalyzes the isomerization of sedoheptulose 7-phosphate in D-glycero-D-manno-heptose 7-phosphate. In Coxiella burnetii (strain RSA 331 / Henzerling II), this protein is Phosphoheptose isomerase.